Here is a 591-residue protein sequence, read N- to C-terminus: L-fucose isomerase (591 aa).

Active-site proton acceptor residues include Glu-338 and Asp-362. Mn(2+) is bound by residues Glu-338, Asp-362, and His-529.

Belongs to the L-fucose isomerase family. Mn(2+) is required as a cofactor.

It localises to the cytoplasm. The catalysed reaction is L-fucose = L-fuculose. Its pathway is carbohydrate degradation; L-fucose degradation; L-lactaldehyde and glycerone phosphate from L-fucose: step 1/3. In terms of biological role, converts the aldose L-fucose into the corresponding ketose L-fuculose. In Phocaeicola vulgatus (strain ATCC 8482 / DSM 1447 / JCM 5826 / CCUG 4940 / NBRC 14291 / NCTC 11154) (Bacteroides vulgatus), this protein is L-fucose isomerase.